The following is a 215-amino-acid chain: Chloramphenicol acetyltransferase (215 aa).

The active-site Proton acceptor is His-189.

This sequence belongs to the chloramphenicol acetyltransferase family. As to quaternary structure, homotrimer.

The enzyme catalyses chloramphenicol + acetyl-CoA = chloramphenicol 3-acetate + CoA. Its function is as follows. This enzyme is an effector of chloramphenicol resistance in bacteria. This Staphylococcus aureus protein is Chloramphenicol acetyltransferase (cat).